We begin with the raw amino-acid sequence, 513 residues long: Probable metalloreductase AIM14 (513 aa).

A run of 7 helical transmembrane segments spans residues 22 to 42, 66 to 86, 103 to 123, 138 to 158, 166 to 186, 193 to 213, and 219 to 239; these read GYII…AHFL, PFWV…FTNV, LAFC…LLGQ, LIIL…TIHH, WANL…IVSS, FYSY…LLMI, and GVSD…ASRV. Positions 100-211 constitute a Ferric oxidoreductase domain; sequence LGRLAFCLVP…NFTVALFVLL (112 aa). Positions 240–368 constitute an FAD-binding FR-type domain; sequence YNGYSVPGLT…GIPLYEYFDN (129 aa).

The protein belongs to the ferric reductase (FRE) family. AIM14 subfamily.

The protein localises to the membrane. Probable cell surface metalloreductase. May be involved in iron or copper homeostasis. This Clavispora lusitaniae (strain ATCC 42720) (Yeast) protein is Probable metalloreductase AIM14 (AIM14).